The sequence spans 470 residues: Protein ASPARTIC PROTEASE IN GUARD CELL 2 (470 aa).

An N-terminal signal peptide occupies residues 1-19; it reads MLLPLFFFFLHLHLHLSSS. A Peptidase A1 domain is found at 131-466; that stretch reads YFVRIGVGSP…DGANGFVGFG (336 aa). Asp149 is an active-site residue. 6 cysteine pairs are disulfide-bonded: Cys159-Cys162, Cys165-Cys239, Cys186-Cys204, Cys191-Cys199, Cys278-Cys470, and Cys389-Cys431. Asp350 is a catalytic residue.

Belongs to the peptidase A1 family.

Aspartic protease that may be involved in drought avoidance through abscisic acid signaling. The protein is Protein ASPARTIC PROTEASE IN GUARD CELL 2 (ASPG2) of Arabidopsis thaliana (Mouse-ear cress).